Here is a 1155-residue protein sequence, read N- to C-terminus: DNA-directed RNA polymerase subunit beta (1155 aa).

The protein belongs to the RNA polymerase beta chain family. In terms of assembly, the RNAP catalytic core consists of 2 alpha, 1 beta, 1 beta' and 1 omega subunit. When a sigma factor is associated with the core the holoenzyme is formed, which can initiate transcription.

The enzyme catalyses RNA(n) + a ribonucleoside 5'-triphosphate = RNA(n+1) + diphosphate. Its function is as follows. DNA-dependent RNA polymerase catalyzes the transcription of DNA into RNA using the four ribonucleoside triphosphates as substrates. The polypeptide is DNA-directed RNA polymerase subunit beta (Borrelia duttonii (strain Ly)).